The following is a 318-amino-acid chain: Cuticle collagen dpy-7 (318 aa).

Triple-helical region stretches follow at residues 101–130 (GPIG…DGLD), 147–206 (GPPG…PGDD), 209–235 (GGTG…NGLP), and 240–278 (GPPG…PGGH). The segment at 101-318 (GPIGPPGVSG…GYSGGGYGKK (218 aa)) is disordered. The span at 187-204 (PQGEPGEQGEPGIKGPPG) shows a compositional bias: low complexity. 2 stretches are compositionally biased toward pro residues: residues 216 to 228 (PPGP…PKGP) and 250 to 268 (PPGP…PFGP). The span at 309-318 (GYSGGGYGKK) shows a compositional bias: gly residues.

The protein belongs to the cuticular collagen family. As to quaternary structure, collagen polypeptide chains are complexed within the cuticle by disulfide bonds and other types of covalent cross-links.

Nematode cuticles are composed largely of collagen-like proteins. The cuticle functions both as an exoskeleton and as a barrier to protect the worm from its environment. Mutations in dpy-7 affects the body shape. This is Cuticle collagen dpy-7 (dpy-7) from Caenorhabditis elegans.